The chain runs to 124 residues: Fluoride-specific ion channel FluC (124 aa).

The next 4 helical transmembrane spans lie at I4–V24, Y35–L55, P63–F83, and I96–T116. Residues G75 and T78 each coordinate Na(+).

This sequence belongs to the fluoride channel Fluc/FEX (TC 1.A.43) family.

The protein resides in the cell inner membrane. It catalyses the reaction fluoride(in) = fluoride(out). Its activity is regulated as follows. Na(+) is not transported, but it plays an essential structural role and its presence is essential for fluoride channel function. Fluoride-specific ion channel. Important for reducing fluoride concentration in the cell, thus reducing its toxicity. This Flavobacterium psychrophilum (strain ATCC 49511 / DSM 21280 / CIP 103535 / JIP02/86) protein is Fluoride-specific ion channel FluC.